A 320-amino-acid chain; its full sequence is MARSKIALIGAGQIGGTLAHLAGLKELGDVVLFDIVDGVPQGKALDIAESAPVDGFDAKYSGASDYSAIAGADVVIVTAGVPRKPGMSRDDLIGINLKVMEAVGAGIKEHAPNAFVICITNPLDAMVWALQKFSGLPTNKVVGMAGVLDSARFRHFLAEEFGVSVEDVTAFVLGGHGDDMVPLTRYSTVAGVPLTDLVKLGWTTQEKLDAMVERTRKGGGEIVNLLKTGSAFYAPASSAIAMAESYLRDKKRVLPCAAYLAGEYGVDGLYVGVPVVIGENGVERVLEVTFNEDEKAMFEKSVGAVKGLIAACQGINDKLA.

NAD(+) is bound by residues 10–15 and Asp-34; that span reads GAGQIG. Arg-83 and Arg-89 together coordinate substrate. NAD(+) is bound by residues Asn-96 and 119–121; that span reads ITN. Substrate-binding residues include Asn-121 and Arg-152. His-176 functions as the Proton acceptor in the catalytic mechanism.

This sequence belongs to the LDH/MDH superfamily. MDH type 3 family.

The enzyme catalyses (S)-malate + NAD(+) = oxaloacetate + NADH + H(+). Catalyzes the reversible oxidation of malate to oxaloacetate. The protein is Malate dehydrogenase of Methylorubrum populi (strain ATCC BAA-705 / NCIMB 13946 / BJ001) (Methylobacterium populi).